The chain runs to 731 residues: Cucumisin (731 aa).

The first 22 residues, 1-22 (MSSSLIFKLFFFSLFFSNRLAS), serve as a signal peptide directing secretion. A propeptide spans 23 to 110 (RLDSDDDGKN…VFLNEMNELH (88 aa)) (activation peptide). Residues 34–110 (YIVYMGRKLE…VFLNEMNELH (77 aa)) enclose the Inhibitor I9 domain. Residues 114–584 (SWDFLGFPLT…SGHVNPLKAV (471 aa)) enclose the Peptidase S8 domain. Aspartate 140 functions as the Charge relay system in the catalytic mechanism. Residues cysteine 166 and cysteine 174 are joined by a disulfide bond. The active-site Charge relay system is the histidine 204. Intrachain disulfides connect cysteine 245–cysteine 250 and cysteine 380–cysteine 397. Asparagine 466 carries N-linked (GlcNAc...) asparagine glycosylation. Serine 525 acts as the Charge relay system in catalysis. The propeptide occupies 616–731 (GDYSACTSGN…RSPITITSLV (116 aa)). Asparagine 652 carries N-linked (GlcNAc...) asparagine glycosylation.

This sequence belongs to the peptidase S8 family. In terms of assembly, monomer and dimer. Post-translationally, the C-terminal propeptide is autocleaved. As to expression, specifically expressed in fruits. Expressed in sarcocarp (at protein level).

It localises to the secreted. It catalyses the reaction Hydrolysis of proteins with broad specificity.. The chain is Cucumisin from Cucumis melo (Muskmelon).